A 275-amino-acid polypeptide reads, in one-letter code: Dermonecrotic toxin SpeSicTox-betaIIA2i (275 aa).

H5 is a catalytic residue. Positions 25 and 27 each coordinate Mg(2+). H41 serves as the catalytic Nucleophile. Intrachain disulfides connect C45–C51 and C47–C190. D85 provides a ligand contact to Mg(2+).

It belongs to the arthropod phospholipase D family. Class II subfamily. The cofactor is Mg(2+). In terms of tissue distribution, expressed by the venom gland.

It is found in the secreted. The enzyme catalyses an N-(acyl)-sphingosylphosphocholine = an N-(acyl)-sphingosyl-1,3-cyclic phosphate + choline. It catalyses the reaction an N-(acyl)-sphingosylphosphoethanolamine = an N-(acyl)-sphingosyl-1,3-cyclic phosphate + ethanolamine. The catalysed reaction is a 1-acyl-sn-glycero-3-phosphocholine = a 1-acyl-sn-glycero-2,3-cyclic phosphate + choline. It carries out the reaction a 1-acyl-sn-glycero-3-phosphoethanolamine = a 1-acyl-sn-glycero-2,3-cyclic phosphate + ethanolamine. Its function is as follows. Dermonecrotic toxins cleave the phosphodiester linkage between the phosphate and headgroup of certain phospholipids (sphingolipid and lysolipid substrates), forming an alcohol (often choline) and a cyclic phosphate. This toxin acts on sphingomyelin (SM). It may also act on ceramide phosphoethanolamine (CPE), lysophosphatidylcholine (LPC) and lysophosphatidylethanolamine (LPE), but not on lysophosphatidylserine (LPS), and lysophosphatidylglycerol (LPG). It acts by transphosphatidylation, releasing exclusively cyclic phosphate products as second products. Induces dermonecrosis, hemolysis, increased vascular permeability, edema, inflammatory response, and platelet aggregation. The sequence is that of Dermonecrotic toxin SpeSicTox-betaIIA2i from Sicarius peruensis (Six-eyed sand spider).